Consider the following 482-residue polypeptide: DNA polymerase II small subunit (482 aa).

Belongs to the DNA polymerase delta/II small subunit family. In terms of assembly, heterodimer of a large subunit and a small subunit.

The catalysed reaction is DNA(n) + a 2'-deoxyribonucleoside 5'-triphosphate = DNA(n+1) + diphosphate. The enzyme catalyses Exonucleolytic cleavage in the 3'- to 5'-direction to yield nucleoside 5'-phosphates.. In terms of biological role, possesses two activities: a DNA synthesis (polymerase) and an exonucleolytic activity that degrades single-stranded DNA in the 3' to 5' direction. Has a template-primer preference which is characteristic of a replicative DNA polymerase. The protein is DNA polymerase II small subunit (polB) of Methanothermobacter thermautotrophicus (strain ATCC 29096 / DSM 1053 / JCM 10044 / NBRC 100330 / Delta H) (Methanobacterium thermoautotrophicum).